A 303-amino-acid chain; its full sequence is Signal recognition particle receptor FtsY (303 aa).

Residues 108–115 (GVNGAGKT), 190–194 (DTAGR), and 254–257 (TKLD) contribute to the GTP site.

Belongs to the GTP-binding SRP family. FtsY subfamily. As to quaternary structure, part of the signal recognition particle protein translocation system, which is composed of SRP and FtsY. SRP is a ribonucleoprotein composed of Ffh and a 4.5S RNA molecule.

It localises to the cell inner membrane. Its subcellular location is the cytoplasm. It carries out the reaction GTP + H2O = GDP + phosphate + H(+). Involved in targeting and insertion of nascent membrane proteins into the cytoplasmic membrane. Acts as a receptor for the complex formed by the signal recognition particle (SRP) and the ribosome-nascent chain (RNC). Interaction with SRP-RNC leads to the transfer of the RNC complex to the Sec translocase for insertion into the membrane, the hydrolysis of GTP by both Ffh and FtsY, and the dissociation of the SRP-FtsY complex into the individual components. The chain is Signal recognition particle receptor FtsY from Rickettsia felis (strain ATCC VR-1525 / URRWXCal2) (Rickettsia azadi).